The chain runs to 216 residues: Uracil phosphoribosyltransferase (216 aa).

GTP contacts are provided by residues arginine 32, arginine 41, 75–78, and lysine 77; that span reads MGKI. Serine 82 carries the post-translational modification Phosphoserine. Residue arginine 85 participates in 5-phospho-alpha-D-ribose 1-diphosphate binding. Arginine 102 lines the GTP pocket. Arginine 110 contributes to the 5-phospho-alpha-D-ribose 1-diphosphate binding site. Arginine 131 contributes to the GTP binding site. 5-phospho-alpha-D-ribose 1-diphosphate is bound by residues aspartate 137 and 137–145; that span reads DPMLATGGS. Tyrosine 201 contributes to the D-ribose 5-phosphate binding site. Uracil contacts are provided by residues leucine 202 and 207-209; that span reads GDF. Position 208 (aspartate 208) interacts with 5-phospho-alpha-D-ribose 1-diphosphate.

The protein belongs to the UPRTase family. Mg(2+) serves as cofactor.

The enzyme catalyses UMP + diphosphate = 5-phospho-alpha-D-ribose 1-diphosphate + uracil. The protein operates within pyrimidine metabolism; UMP biosynthesis via salvage pathway; UMP from uracil: step 1/1. With respect to regulation, allosterically activated by GTP. Functionally, catalyzes the conversion of uracil and 5-phospho-alpha-D-ribose 1-diphosphate (PRPP) to UMP and diphosphate in the pyrimidine salvage pathway. In Saccharomyces cerevisiae (strain ATCC 204508 / S288c) (Baker's yeast), this protein is Uracil phosphoribosyltransferase (FUR1).